The primary structure comprises 377 residues: Nitric oxide reductase FlRd-NAD(+) reductase (377 aa).

This sequence belongs to the FAD-dependent oxidoreductase family. The cofactor is FAD.

It localises to the cytoplasm. The catalysed reaction is 2 reduced [nitric oxide reductase rubredoxin domain] + NAD(+) + H(+) = 2 oxidized [nitric oxide reductase rubredoxin domain] + NADH. The protein operates within nitrogen metabolism; nitric oxide reduction. Its function is as follows. One of at least two accessory proteins for anaerobic nitric oxide (NO) reductase. Reduces the rubredoxin moiety of NO reductase. The protein is Nitric oxide reductase FlRd-NAD(+) reductase of Salmonella schwarzengrund (strain CVM19633).